Reading from the N-terminus, the 1997-residue chain is Nucleoprotein TPR (1997 aa).

4 coiled-coil regions span residues 1-36 (QEQHSQLEAAKTQVEKDMGEKISNLERELENANDLL), 101-277 (EIVK…HQMT), 335-1103 (DSTE…IKTI), and 1129-1305 (AEAS…EPQE). 2 stretches are compositionally biased toward basic and acidic residues: residues 672 to 702 (SSEYQSQLEKKMMESEKEKQELRDEKHKTVE) and 1290 to 1305 (REQQERHHEQRDEPQE). 6 disordered regions span residues 672 to 706 (SSEYQSQLEKKMMESEKEKQELRDEKHKTVEQMEQ), 1290 to 1352 (REQQ…AAVP), 1438 to 1529 (AFVQ…KTET), 1561 to 1752 (IQTS…RRQS), 1795 to 1832 (AIHSPQVAGVPRFRFGPPEDMPQASSSHSDLGQLASQG), and 1870 to 1997 (ENPA…RSNI). Composition is skewed to polar residues over residues 1306-1321 (TTRIPQQRQITLQPTT), 1328-1347 (SANTSEPPTANIKPTPSKVT), and 1446-1487 (SHAT…SSSI). Basic and acidic residues predominate over residues 1511-1529 (DQQRTKKRKEEDIEEKTET). A compositionally biased stretch (polar residues) spans 1561–1587 (IQTSQVIESQAPEQLQNVQSTQDSLQD). Acidic residues-rich tracts occupy residues 1601 to 1637 (SDEENEDEQEGYEEEEQEDEEEDEDDAGIGEGDDSNE) and 1644 to 1667 (GNEDYEGDDAEEADGTDPDTETED). Composition is skewed to polar residues over residues 1692 to 1709 (AESTFSQETREQPSSASD), 1817 to 1830 (QASSSHSDLGQLAS), and 1879 to 1899 (HASQSVPMVTTSTGNVPTSVD). The segment covering 1902-1915 (AADEGDEVFVEAES) has biased composition (acidic residues). Residues 1950–1959 (SSSIADTSSS) show a composition bias toward low complexity.

The protein belongs to the TPR family. As to quaternary structure, homodimer. Part of the nuclear pore complex (NPC). Interacts with nuclear receptor KPNB1; the interaction occurs in a RanGTP-dependent manner. Associates with the Importin alpha/Importin beta receptor. As to expression, expressed in epithelial cells, oocytes and egg (at protein level).

The protein localises to the nucleus. The protein resides in the nucleus membrane. Its subcellular location is the nucleus envelope. It localises to the nuclear pore complex. It is found in the cytoplasm. The protein localises to the cytoskeleton. The protein resides in the spindle. Its subcellular location is the chromosome. It localises to the centromere. It is found in the kinetochore. Functionally, component of the nuclear pore complex (NPC), a complex required for the trafficking across the nuclear envelope. Functions as a scaffolding element in the nuclear phase of the NPC essential for normal nucleocytoplasmic transport of proteins and mRNAs, plays a role in the establishment of nuclear-peripheral chromatin compartmentalization in interphase, and in the mitotic spindle checkpoint signaling during mitosis. Involved in the quality control and retention of unspliced mRNAs in the nucleus. Implicated in nuclear export of mRNAs transcribed from heat shock gene promoters. May play a limited role in the regulation of nuclear protein export. May be involved in the formation and/or maintenance of NPC-associated perinuclear heterochromatin exclusion zones (HEZs). Finally, may act as a spatial regulator of the spindle-assembly checkpoint (SAC) response. This is Nucleoprotein TPR from Xenopus laevis (African clawed frog).